Consider the following 129-residue polypeptide: Mitochondrial pyruvate carrier 2 (129 aa).

Over 2-22 the chain is Mitochondrial matrix; the sequence is STSSVRFAFRRFWQSETGPKT. The helical transmembrane segment at 23–39 threads the bilayer; it reads VHFWAPTLKWGLVFAGF. Topologically, residues 40–54 are mitochondrial intermembrane; that stretch reads SDMKRPVEKISGAQN. The chain crosses the membrane as a helical span at residues 55–71; it reads LSLLSTALIWTRWSFVI. The Mitochondrial matrix segment spans residues 72–74; the sequence is KPR. A helical transmembrane segment spans residues 75–91; sequence NILLASVNSFLCLTAGY. The Mitochondrial intermembrane portion of the chain corresponds to 92-129; it reads QLGRIANYRIRNGDSISQLCSYILSGADESKKEITTGR.

It belongs to the mitochondrial pyruvate carrier (MPC) (TC 2.A.105) family. In terms of assembly, the functional 150 kDa pyruvate import complex is a heteromer of MPC1 and either MPC2 or MPC3.

It is found in the mitochondrion. The protein resides in the mitochondrion inner membrane. The enzyme catalyses pyruvate(out) + H(+)(out) = pyruvate(in) + H(+)(in). Functionally, mediates the uptake of pyruvate into mitochondria. The sequence is that of Mitochondrial pyruvate carrier 2 from Saccharomyces cerevisiae (strain ATCC 204508 / S288c) (Baker's yeast).